The chain runs to 243 residues: NAD-dependent protein deacetylase (243 aa).

Residues 1 to 243 (MKHDLETLKH…VSVVKSLMTE (243 aa)) enclose the Deacetylase sirtuin-type domain. NAD(+)-binding residues include alanine 24, phenylalanine 35, arginine 36, glutamine 105, isoleucine 107, aspartate 108, and histidine 123. Phenylalanine 35 contributes to the nicotinamide binding site. 2 residues coordinate nicotinamide: isoleucine 107 and aspartate 108. Catalysis depends on histidine 123, which acts as the Proton acceptor. Residues cysteine 131, cysteine 134, cysteine 151, and cysteine 154 each coordinate Zn(2+). Serine 192, serine 193, asparagine 215, and aspartate 232 together coordinate NAD(+).

The protein belongs to the sirtuin family. Class U subfamily. Requires Zn(2+) as cofactor.

It is found in the cytoplasm. The enzyme catalyses N(6)-acetyl-L-lysyl-[protein] + NAD(+) + H2O = 2''-O-acetyl-ADP-D-ribose + nicotinamide + L-lysyl-[protein]. Functionally, NAD-dependent protein deacetylase which modulates the activities of several enzymes which are inactive in their acetylated form. This Staphylococcus aureus (strain COL) protein is NAD-dependent protein deacetylase.